The sequence spans 161 residues: Large ribosomal subunit protein uL15 (161 aa).

The segment at 1 to 43 is disordered; that stretch reads MKLSDIADNAGSRKKRMRIGRGIGSGKGKTGGRGGKGQTARSG. Positions 21–37 are enriched in gly residues; that stretch reads RGIGSGKGKTGGRGGKG.

This sequence belongs to the universal ribosomal protein uL15 family. In terms of assembly, part of the 50S ribosomal subunit.

Binds to the 23S rRNA. This Nitrobacter hamburgensis (strain DSM 10229 / NCIMB 13809 / X14) protein is Large ribosomal subunit protein uL15.